A 358-amino-acid polypeptide reads, in one-letter code: Cyanide hydratase (358 aa).

In terms of domain architecture, CN hydrolase spans 8–287 (YKAAAVNAEP…QGLLFVDIDL (280 aa)). The active-site Proton acceptor is the Glu-48. Lys-130 is a catalytic residue. Cys-165 serves as the catalytic Nucleophile.

Belongs to the carbon-nitrogen hydrolase superfamily. Nitrilase family. Oligomer of dimers, forming left-handed helical fibers.

The enzyme catalyses formamide = hydrogen cyanide + H2O. Its function is as follows. Catalyzes the hydration of cyanide to formamide. Degradation of cyanide may be important for plant pathogenic fungi in infection of cyanogenic plants. This Penicillium rubens (strain ATCC 28089 / DSM 1075 / NRRL 1951 / Wisconsin 54-1255) (Penicillium chrysogenum) protein is Cyanide hydratase.